A 131-amino-acid polypeptide reads, in one-letter code: Agouti-related protein (131 aa).

The signal sequence occupies residues 1 to 20; it reads MLTAMLLSCVLLLALPPTLG. Residues 21-81 constitute a propeptide that is removed on maturation; the sequence is VQMGVAPLKG…VLDPQNRESR (61 aa). Cystine bridges form between C86–C101, C93–C107, C100–C118, C104–C128, and C109–C116. The 43-residue stretch at 86–128 folds into the Agouti domain; it reads CVRLHESCLGQQVPCCDPCATCYCRFFNAFCYCRKLGTATNLC. The tract at residues 110-112 is interaction with melanocortin receptors; sequence RFF.

Interacts with melanocortin receptors MC3R, MC4R and MC5R. Expressed in arcuate nucleus and median eminence, adrenal gland (medulla), hypothalamus, testis, and lung.

Its subcellular location is the secreted. The protein resides in the golgi apparatus lumen. Functionally, plays a role in weight homeostasis. Involved in the control of feeding behavior through the central melanocortin system. Acts as alpha melanocyte-stimulating hormone antagonist by inhibiting cAMP production mediated by stimulation of melanocortin receptors within the hypothalamus and adrenal gland. Has very low activity with MC5R. Is an inverse agonist for MC3R and MC4R being able to suppress their constitutive activity. It promotes MC3R and MC4R endocytosis in an arrestin-dependent manner. The sequence is that of Agouti-related protein (Agrp) from Mus musculus (Mouse).